Consider the following 497-residue polypeptide: Protein adenylyltransferase Fic (497 aa).

Positions 1–30 (MGATDQALEAESKTTEPPKTPPVPEQHDRP) are disordered. A helical membrane pass occupies residues 38–58 (LCHLLVLLFSGGLAAITLHIF). TPR repeat units lie at residues 123 to 156 (ALGA…APRH) and 157 to 191 (PTVL…SPSN). Positions 248–253 (TVGIEG) match the Inhibitory (S/T)XXXE(G/N) motif motif. ATP-binding positions include Glu252 and 333 to 336 (VGGH). A Fido domain is found at 302 to 437 (ITIKDILELH…IRPFVRFIAD (136 aa)). The active site involves His380. ATP is bound by residues 384 to 391 (DGNGRTSR), 416 to 417 (YY), and Asn424. A disordered region spans residues 468–497 (GEGVPQLQSSQMGGGASIPEFHESGSGSLP).

The protein belongs to the fic family. In terms of assembly, homodimer.

It is found in the membrane. It carries out the reaction L-tyrosyl-[protein] + ATP = O-(5'-adenylyl)-L-tyrosyl-[protein] + diphosphate. It catalyses the reaction L-threonyl-[protein] + ATP = 3-O-(5'-adenylyl)-L-threonyl-[protein] + diphosphate. The enzyme catalyses 3-O-(5'-adenylyl)-L-threonyl-[protein] + H2O = L-threonyl-[protein] + AMP + H(+). With respect to regulation, the side chain of Glu-252 determines which of the two opposing activities (AMPylase or de-AMPylase) will take place. In response to endoplasmic reticulum stress, mediates de-AMPylase activity. Adenylyltransferase activity is inhibited by the inhibitory helix present at the N-terminus: Glu-252 binds ATP and competes with ATP-binding at Arg-391, thereby preventing adenylyltransferase activity. In unstressed cells, disengagement of Glu-252 promotes adenylyltransferase activity. Activation dissociates ATP-binding from Glu-252, allowing ordered binding of the entire ATP moiety with the alpha-phosphate in an orientation that is productive for accepting an incoming target hydroxyl side chain. Its function is as follows. Protein that can both mediate the addition of adenosine 5'-monophosphate (AMP) to specific residues of target proteins (AMPylation), and the removal of the same modification from target proteins (de-AMPylation), depending on the context. The side chain of Glu-252 determines which of the two opposing activities (AMPylase or de-AMPylase) will take place. Acts as a key regulator of the unfolded protein response (UPR) by mediating AMPylation or de-AMPylation of Hsc70-3/BiP. In unstressed cells, acts as an adenylyltransferase by mediating AMPylation of Hsc70-3/BiP at 'Thr-518', thereby inactivating it. In response to endoplasmic reticulum stress, acts as a phosphodiesterase by mediating removal of ATP (de-AMPylation) from Hsc70-3/BiP at 'Thr-518', leading to restore HSPA5/BiP activity. The polypeptide is Protein adenylyltransferase Fic (Drosophila ananassae (Fruit fly)).